The following is a 230-amino-acid chain: MTTTSASTTDHLIDQQVIDGQAGYTKSFLNIYDLAVFKGTAPLAWHCSPAVSRQMYDTCLGANHVEIGVGTGYLLDNATFPVADPKITLVDLNPNSLAHTAQRLNRYDVTTVRANVLEPLPLEERAYDSVGMSYLLHCVPGSIKEKGIALKHAAAVVRPGGVVFGATVLSSGVPVSARGRWTMNYLNKRGDFHNQEDNYDDLRDQLAQYFPRFQLTSRGCVGIWRAWTTD.

Belongs to the methyltransferase superfamily.

It catalyses the reaction demethylluteothin + S-adenosyl-L-methionine = luteothin + S-adenosyl-L-homocysteine. It participates in antibiotic biosynthesis. The protein operates within polyketide biosynthesis. Methyltransferase involved in the biosynthesis of the antibiotic aureothin, a nitroaryl polyketide metabolite with antifungal, cytotoxic and insecticidal activities. Catalyzes the methylation of demethylluteothin to luteothin (also called deoxyaureothin). Is specific for its gamma-pyrone substrate, and does not act on the alpha-pyrone isomer. This Streptomyces thioluteus protein is Demethylluteothin O-methyltransferase.